Consider the following 443-residue polypeptide: Ribulose bisphosphate carboxylase large chain (443 aa).

Substrate is bound by residues N89 and T139. The Proton acceptor role is filled by K141. Position 143 (K143) interacts with substrate. 3 residues coordinate Mg(2+): K167, D169, and E170. Position 167 is an N6-carboxylysine (K167). Catalysis depends on H260, which acts as the Proton acceptor. Substrate is bound by residues R261, H293, and S345.

It belongs to the RuBisCO large chain family. Type I subfamily. In terms of assembly, heterohexadecamer of 8 large chains and 8 small chains; disulfide-linked. The disulfide link is formed within the large subunit homodimers. Mg(2+) is required as a cofactor. The disulfide bond which can form in the large chain dimeric partners within the hexadecamer appears to be associated with oxidative stress and protein turnover.

It is found in the plastid. The protein localises to the chloroplast. It carries out the reaction 2 (2R)-3-phosphoglycerate + 2 H(+) = D-ribulose 1,5-bisphosphate + CO2 + H2O. The catalysed reaction is D-ribulose 1,5-bisphosphate + O2 = 2-phosphoglycolate + (2R)-3-phosphoglycerate + 2 H(+). Functionally, ruBisCO catalyzes two reactions: the carboxylation of D-ribulose 1,5-bisphosphate, the primary event in carbon dioxide fixation, as well as the oxidative fragmentation of the pentose substrate in the photorespiration process. Both reactions occur simultaneously and in competition at the same active site. This Villarsia calthifolia (Marsh flower) protein is Ribulose bisphosphate carboxylase large chain.